The following is a 295-amino-acid chain: Bifunctional protein FolD (295 aa).

Residues 166-168 (GRS), serine 195, and isoleucine 236 contribute to the NADP(+) site.

Belongs to the tetrahydrofolate dehydrogenase/cyclohydrolase family. As to quaternary structure, homodimer.

It catalyses the reaction (6R)-5,10-methylene-5,6,7,8-tetrahydrofolate + NADP(+) = (6R)-5,10-methenyltetrahydrofolate + NADPH. The catalysed reaction is (6R)-5,10-methenyltetrahydrofolate + H2O = (6R)-10-formyltetrahydrofolate + H(+). Its pathway is one-carbon metabolism; tetrahydrofolate interconversion. Catalyzes the oxidation of 5,10-methylenetetrahydrofolate to 5,10-methenyltetrahydrofolate and then the hydrolysis of 5,10-methenyltetrahydrofolate to 10-formyltetrahydrofolate. The chain is Bifunctional protein FolD from Pelodictyon phaeoclathratiforme (strain DSM 5477 / BU-1).